We begin with the raw amino-acid sequence, 156 residues long: SCP2 sterol-binding domain-containing protein 1 (156 aa).

The SCP2 domain occupies 44–156 (SFPVFQDIRL…ERVFKDWAKF (113 aa)).

This chain is SCP2 sterol-binding domain-containing protein 1 (SCP2D1), found in Homo sapiens (Human).